Consider the following 324-residue polypeptide: Dolichyl-phosphate beta-glucosyltransferase (324 aa).

The Lumenal segment spans residues 1–7 (MAPLLLQ). The helical; Signal-anchor for type II membrane protein transmembrane segment at 8–28 (LAVLGAALAAAALVLISIVAF) threads the bilayer. Topologically, residues 29 to 324 (TTATKMPALH…WRLEQTRKMN (296 aa)) are cytoplasmic.

It belongs to the glycosyltransferase 2 family. In terms of tissue distribution, expressed in pancreas, placenta, liver, heart, brain, kidney, skeletal muscle, and lung.

The protein localises to the endoplasmic reticulum membrane. The enzyme catalyses a di-trans,poly-cis-dolichyl phosphate + UDP-alpha-D-glucose = a di-trans,poly-cis-dolichyl beta-D-glucosyl phosphate + UDP. It participates in protein modification; protein glycosylation. Dolichyl-phosphate beta-glucosyltransferase that operates in the biosynthetic pathway of dolichol-linked oligosaccharides, the glycan precursors employed in protein asparagine (N)-glycosylation. The assembly of dolichol-linked oligosaccharides begins on the cytosolic side of the endoplasmic reticulum membrane and finishes in its lumen. The sequential addition of sugars to dolichol pyrophosphate produces dolichol-linked oligosaccharides containing fourteen sugars, including two GlcNAcs, nine mannoses and three glucoses. Once assembled, the oligosaccharide is transferred from the lipid to nascent proteins by oligosaccharyltransferases. Dolichyl-phosphate beta-glucosyltransferase produces dolichyl beta-D-glucosyl phosphate/Dol-P-Glc, the glucose donor substrate used sequentially by ALG6, ALG8 and ALG10 to add glucose residues on top of the Man(9)GlcNAc(2)-PP-Dol structure. These are the three last steps in the biosynthetic pathway of dolichol-linked oligosaccharides to produce Glc(3)Man(9)GlcNAc(2)-PP-Dol. The enzyme is most probably active on the cytoplasmic side of the endoplasmic reticulum while its product Dol-P-Glc is the substrate for ALG6, ALG8 and ALG11 in the lumen of the endoplasmic reticulum. The sequence is that of Dolichyl-phosphate beta-glucosyltransferase from Homo sapiens (Human).